The chain runs to 128 residues: Transmembrane protein 234 homolog (128 aa).

Helical transmembrane passes span 3-23 (TYNI…NPLI), 53-73 (PSYT…FYTL), 80-100 (LVVP…GMLL), and 104-124 (VLHF…TICV).

This sequence belongs to the TMEM234 family.

Its subcellular location is the membrane. In Dictyostelium discoideum (Social amoeba), this protein is Transmembrane protein 234 homolog.